We begin with the raw amino-acid sequence, 556 residues long: Formate--tetrahydrofolate ligase (556 aa).

Residue 65–72 coordinates ATP; the sequence is TPAGEGKS.

This sequence belongs to the formate--tetrahydrofolate ligase family.

The catalysed reaction is (6S)-5,6,7,8-tetrahydrofolate + formate + ATP = (6R)-10-formyltetrahydrofolate + ADP + phosphate. The protein operates within one-carbon metabolism; tetrahydrofolate interconversion. In Streptococcus pneumoniae (strain ATCC 700669 / Spain 23F-1), this protein is Formate--tetrahydrofolate ligase.